A 383-amino-acid chain; its full sequence is Methenyltetrahydrofolate synthase domain-containing protein (383 aa).

The segment at 249-301 (AGKDVTLQGEHQHLPEPGCQQTVPLSVGRRPPDTPGPETNSMEAAPGSPPGEG) is disordered. The RRM domain maps to 306 to 379 (ADVYVGNLPG…DTLRVALARQ (74 aa)).

This chain is Methenyltetrahydrofolate synthase domain-containing protein (MTHFSD), found in Homo sapiens (Human).